We begin with the raw amino-acid sequence, 754 residues long: Probable beta-glucosidase D (754 aa).

Residues 1 to 20 form the signal peptide; that stretch reads MKVLSFIVAAALLGLTGASS. N-linked (GlcNAc...) asparagine glycans are attached at residues N66, N69, and N186. The disordered stretch occupies residues 186–206; that stretch reads NRTGGGGGGGGDSGSAPYSSN. Positions 188–198 are enriched in gly residues; that stretch reads TGGGGGGGGDS. A glycan (N-linked (GlcNAc...) asparagine) is linked at N239. The active site involves D267. N301, N345, N443, N512, N534, N573, N588, N655, and N745 each carry an N-linked (GlcNAc...) asparagine glycan.

Belongs to the glycosyl hydrolase 3 family.

It is found in the secreted. The enzyme catalyses Hydrolysis of terminal, non-reducing beta-D-glucosyl residues with release of beta-D-glucose.. It functions in the pathway glycan metabolism; cellulose degradation. Functionally, beta-glucosidases are one of a number of cellulolytic enzymes involved in the degradation of cellulosic biomass. Catalyzes the last step releasing glucose from the inhibitory cellobiose. The sequence is that of Probable beta-glucosidase D (bglD) from Aspergillus niger (strain ATCC MYA-4892 / CBS 513.88 / FGSC A1513).